A 237-amino-acid chain; its full sequence is MHTDWETSESAEDYSRNTAAAQWEPMGYPAVFRSLALATTDSDNAPPILDYGCGPGFVDRHVAEKYGRRVIAVDISSSMIDLARSQHSHPLVTYRHVPDSQLDFLGDKEIGGCMSCFVLMQMADSDTQVEICRRIRRTLAPGAMLAVLNTHPDSVGIQFATLRNGEPDRVYQPGDPMTTVLTTDKGVLRLQDYYWRVTDYVHALEAAGFHEVTVEHLPPPPADPTPHPQFLLVRGTA.

This sequence belongs to the methyltransferase superfamily.

It carries out the reaction N-demethylindolmycin + S-adenosyl-L-methionine = indolmycin + S-adenosyl-L-homocysteine + H(+). In terms of biological role, involved in the biosynthesis of the antibiotic indolmycin, an inhibitor of the bacterial tryptophan-tRNA synthetases. Catalyzes the methylation of N-demethylindolmycin to yield indolmycin, with S-adenosylmethionine (AdoMet) acting as the methyl donor. The chain is N-demethylindolmycin N-methyltransferase from Streptomyces griseus.